Consider the following 905-residue polypeptide: MKLFVGEGNPQGVKVLAAAALWAQHVQIDRLQQEEKIVPFMSQPRLPVLDLENGNYLFLSNAICRYFYLSSGHDMCDLSNQWLEWEAAELQPALSAALYAHVVQGKKKEDVMATISASLKHLDQSLAGKSSPYLIKDALTVVDIVVWGSIYPLIVDASNLPEEMASLKRWFQNVSQLEQCQKAASSLLKDKGSSVFKPFLQKQPAPITPPGKSVCKEQEGEDMPSLSEEDIQAAAEAWAKGLTGASKPKQRPHPILPVEGEKNVLITSALPYVNNVPHLGNIIGSVLSADVFARYCRLRNWNTLYICGTDEYGTATETKAMEEGLTPQQICDKYNAIHTAIYQWFNISFDYFGRTTTQHQTTISQDIFHRLLEREFLLTDTVEQLRCEKCQRFLADRFVEGICPFCNYEEARGDQCDKCGKLINAVELKKPQCKICKQSPVIKSSKHLFLDLPKLEKRLEQWLEQSFSTGDWTSNARFITRSWIRDGLKPRCITRDLKWGTPVPLDGFRDKVFYVWFDAPIGYISITANYTDQWEKWWKSPQQVQLYNFMAKDNVPFHSVVFPSCLLGAEDNYTLVNHLVATEYLNYEDGKFSKSRGVGVFGDMAKDTGIPADIWRFYLLYVRPEGQDSAFSWSDLMLKNNSELLNNLGNFVNRAGMFVQKFFNGCVPEMELLSEDKRLLAQVAAELQQYNLLLEKVRIRDALRCILNISRHGNQYIQVNEPWKCIKGNQQEQKRAGTVTGVAVNMAALLSIMLHPYMPTISSVIQEQLLMPQESKVLTTDFCCCLQSGHQIGNVSPLFQKLENDQIESLRKRFGGGQVKTESKVSPSQEAPEQQAPKASGPERVKELMQELEKQGNHVRELKGKKAEKSVIDPEVQKLLALKKELALAEGKSPDPPTQKGKKKK.

One can recognise a GST N-terminal domain in the interval 1-75; sequence MKLFVGEGNP…YFYLSSGHDM (75 aa). The GST C-terminal domain occupies 72–199; sequence GHDMCDLSNQ…DKGSSVFKPF (128 aa). The short motif at 271–281 is the 'HIGH' region element; it reads PYVNNVPHLGN. The 'KMSKS' region signature appears at 591–595; sequence KFSKS. Position 594 (lysine 594) interacts with ATP. 2 disordered regions span residues 813-874 and 886-905; these read RFGG…VIDP and LALAEGKSPDPPTQKGKKKK. Basic and acidic residues predominate over residues 841–874; sequence GPERVKELMQELEKQGNHVRELKGKKAEKSVIDP. Residues 844–900 form the WHEP-TRS domain; that stretch reads RVKELMQELEKQGNHVRELKGKKAEKSVIDPEVQKLLALKKELALAEGKSPDPPTQK.

It belongs to the class-I aminoacyl-tRNA synthetase family. As to quaternary structure, monomer. Part of a multisubunit complex that groups tRNA ligases for Arg (RARS1), Asp (DARS1), Gln (QARS1), Ile (IARS1), Leu (LARS1), Lys (KARS1), Met (MARS1) the bifunctional ligase for Glu and Pro (EPRS1) and the auxiliary subunits AIMP1/p43, AIMP2/p38 and EEF1E1/p18.

It is found in the cytoplasm. Its subcellular location is the cytosol. It localises to the nucleus. The protein resides in the nucleolus. The enzyme catalyses tRNA(Met) + L-methionine + ATP = L-methionyl-tRNA(Met) + AMP + diphosphate. Catalyzes the specific attachment of an amino acid to its cognate tRNA in a 2 step reaction: the amino acid (AA) is first activated by ATP to form AA-AMP and then transferred to the acceptor end of the tRNA. Plays a role in the synthesis of ribosomal RNA in the nucleolus. The protein is Methionine--tRNA ligase, cytoplasmic (mars1) of Xenopus laevis (African clawed frog).